The primary structure comprises 278 residues: Polyamine aminopropyltransferase (278 aa).

In terms of domain architecture, PABS spans 3 to 240; sequence EGWFTEAVED…GWWSATLMVN (238 aa). Glutamine 33 serves as a coordination point for S-methyl-5'-thioadenosine. Residues histidine 64 and aspartate 88 each coordinate spermidine. Residues glutamate 108 and 139–140 each bind S-methyl-5'-thioadenosine; that span reads DG. The Proton acceptor role is filled by aspartate 158. 158–161 provides a ligand contact to spermidine; sequence DSTD. Proline 165 contributes to the S-methyl-5'-thioadenosine binding site.

The protein belongs to the spermidine/spermine synthase family. In terms of assembly, homodimer or homotetramer.

The protein resides in the cytoplasm. It carries out the reaction S-adenosyl 3-(methylsulfanyl)propylamine + putrescine = S-methyl-5'-thioadenosine + spermidine + H(+). It participates in amine and polyamine biosynthesis; spermidine biosynthesis; spermidine from putrescine: step 1/1. In terms of biological role, catalyzes the irreversible transfer of a propylamine group from the amino donor S-adenosylmethioninamine (decarboxy-AdoMet) to putrescine (1,4-diaminobutane) to yield spermidine. This is Polyamine aminopropyltransferase from Halorhodospira halophila (strain DSM 244 / SL1) (Ectothiorhodospira halophila (strain DSM 244 / SL1)).